Reading from the N-terminus, the 379-residue chain is uncharacterized protein (379 aa).

3 disordered regions span residues 1–25 (MASD…EKGK), 128–158 (QGKT…IERT), and 355–379 (TEKT…QGDI). The segment covering 128–141 (QGKTTSATTSNSTI) has biased composition (polar residues).

This is an uncharacterized protein from Caenorhabditis elegans.